The chain runs to 681 residues: DNA-directed RNA polymerase subunit beta' (681 aa).

Zn(2+) is bound by residues C69, C71, C87, and C90. Positions 489, 491, and 493 each coordinate Mg(2+).

It belongs to the RNA polymerase beta' chain family. RpoC1 subfamily. As to quaternary structure, in plastids the minimal PEP RNA polymerase catalytic core is composed of four subunits: alpha, beta, beta', and beta''. When a (nuclear-encoded) sigma factor is associated with the core the holoenzyme is formed, which can initiate transcription. Mg(2+) serves as cofactor. It depends on Zn(2+) as a cofactor.

The protein resides in the plastid. Its subcellular location is the chloroplast. The enzyme catalyses RNA(n) + a ribonucleoside 5'-triphosphate = RNA(n+1) + diphosphate. Its function is as follows. DNA-dependent RNA polymerase catalyzes the transcription of DNA into RNA using the four ribonucleoside triphosphates as substrates. This chain is DNA-directed RNA polymerase subunit beta', found in Nicotiana sylvestris (Wood tobacco).